Reading from the N-terminus, the 418-residue chain is Probable aminotransferase Rv1178 (418 aa).

Positions 22–42 (GQGWHDRERPASGQGSGAAER) are disordered.

Belongs to the class-I pyridoxal-phosphate-dependent aminotransferase family. The cofactor is pyridoxal 5'-phosphate.

The sequence is that of Probable aminotransferase Rv1178 from Mycobacterium tuberculosis (strain ATCC 25618 / H37Rv).